The following is a 348-amino-acid chain: Succinylglutamate desuccinylase (348 aa).

Residues histidine 64, glutamate 67, and histidine 164 each coordinate Zn(2+). Glutamate 228 is a catalytic residue.

This sequence belongs to the AspA/AstE family. Succinylglutamate desuccinylase subfamily. The cofactor is Zn(2+).

It catalyses the reaction N-succinyl-L-glutamate + H2O = L-glutamate + succinate. Its pathway is amino-acid degradation; L-arginine degradation via AST pathway; L-glutamate and succinate from L-arginine: step 5/5. In terms of biological role, transforms N(2)-succinylglutamate into succinate and glutamate. In Shewanella amazonensis (strain ATCC BAA-1098 / SB2B), this protein is Succinylglutamate desuccinylase.